The chain runs to 201 residues: MDIKACYQNAQALLEGHFLLSSGFHSNYYLQSAKVLEDPKLAEQLAKELAKQIQEAHLNIECVCSPAIGGILAGYELARALGVRFIFTERVDNTMTLRRGFEVKKNEKILVCEDIITTGKSAMECTKVLEEKGAQIVAFGALANRGICKRTHSHLKAQEGACLPSHLPLFALEDFVFDMHKPNSCPLCATSVAIKPGSRGN.

113–121 (EDIITTGKS) lines the 5-phospho-alpha-D-ribose 1-diphosphate pocket. Thr117 and Arg145 together coordinate orotate.

The protein belongs to the purine/pyrimidine phosphoribosyltransferase family. PyrE subfamily. In terms of assembly, homodimer. Mg(2+) is required as a cofactor.

It carries out the reaction orotidine 5'-phosphate + diphosphate = orotate + 5-phospho-alpha-D-ribose 1-diphosphate. It functions in the pathway pyrimidine metabolism; UMP biosynthesis via de novo pathway; UMP from orotate: step 1/2. In terms of biological role, catalyzes the transfer of a ribosyl phosphate group from 5-phosphoribose 1-diphosphate to orotate, leading to the formation of orotidine monophosphate (OMP). This Helicobacter pylori (strain P12) protein is Orotate phosphoribosyltransferase.